The primary structure comprises 139 residues: Invertebrate-type lysozyme 3 (139 aa).

A signal peptide spans 1–18; that stretch reads MFVKSLVFLTIAVAYASA. Residues 19-138 enclose the I-type lysozyme domain; it reads DCLHCICMRE…WNGIKSCCGC (120 aa). Disulfide bonds link C20/C106, C23/C138, C25/C31, C36/C45, C58/C86, C76/C82, and C98/C120. Residue E28 is the Proton donor of the active site. D39 serves as the catalytic Nucleophile. 51–57 contributes to the substrate binding site; that stretch reads KLPYYED. Substrate-binding positions include Y90 and 113 to 115; that span reads HNG.

Belongs to the glycosyl hydrolase 22 family. Type-I lysozyme subfamily. Expressed in pharynx grinder muscle pm7, isthmus marginal cell mc2 and pharyngeal muscle cell pm5, intestinal cells and at lower levels in coelomocytes and epidermis. Expressed at low levels in intestine.

Its subcellular location is the late endosome lumen. It localises to the recycling endosome lumen. It is found in the lysosome lumen. The protein resides in the secreted. The catalysed reaction is Hydrolysis of (1-&gt;4)-beta-linkages between N-acetylmuramic acid and N-acetyl-D-glucosamine residues in a peptidoglycan and between N-acetyl-D-glucosamine residues in chitodextrins.. Its function is as follows. Has bacteriolytic activity against Gram-positive bacteria. Plays a role in defense against bacterial pathogens. Involved in pharyngeal grinder function by enabling proper lysis of ingested bacteria. The chain is Invertebrate-type lysozyme 3 from Caenorhabditis elegans.